Reading from the N-terminus, the 528-residue chain is ATP synthase subunit alpha 1 (528 aa).

177–184 (GDRQTGKT) lines the ATP pocket.

The protein belongs to the ATPase alpha/beta chains family. F-type ATPases have 2 components, CF(1) - the catalytic core - and CF(0) - the membrane proton channel. CF(1) has five subunits: alpha(3), beta(3), gamma(1), delta(1), epsilon(1). CF(0) has three main subunits: a(1), b(2) and c(9-12). The alpha and beta chains form an alternating ring which encloses part of the gamma chain. CF(1) is attached to CF(0) by a central stalk formed by the gamma and epsilon chains, while a peripheral stalk is formed by the delta and b chains.

The protein localises to the cell inner membrane. The enzyme catalyses ATP + H2O + 4 H(+)(in) = ADP + phosphate + 5 H(+)(out). In terms of biological role, produces ATP from ADP in the presence of a proton gradient across the membrane. The alpha chain is a regulatory subunit. In Pseudoalteromonas atlantica (strain T6c / ATCC BAA-1087), this protein is ATP synthase subunit alpha 1.